The sequence spans 969 residues: MFVVGQRWISESENNLGLGIVTASDNRTVTIQFPAAEEERIYALSVAPLTRVQFQKGDRINSVEGWQLDVEEVVENQGFIIYLGKRADSGEEAVLPEMQLDHKVSFSKPQDRLFSAQIDRSDRFALRYRALQHQQAQFQSPLRGMRGIRASLIPHQLHIAKEVGQRVAPRVLLADEVGLGKTIEAGMILQQQLFSGRVERVLVLVPESLQHQWLVEMLRRFNLKFSLFDEERCSDFDKADEDGNDVSENPFDSEALVIASIDWLESSPNRAKQVLASHWDMLIVDEAHHLAWSENEPSVGYQFVERLSKQTPAVLLLTATPEQLGQESHFARLALLDADRFYDYHSFIAEQKDYKPVADAVATLLNDKPLSHDEQNSIAELLSEKDTEPMFKVINSEKSKENDRLQVRQELIRELIDRHGTSRVLFRNTRQGVKGFPHRVYHQITLEMPSQYTNALKVMGMMGGVTKDDQLYPERLFQRMNPAAKWADFDPRIEWLITFLKNHRDEKILVICKQADTAIALEQILREREAIRSAVFHEKMSIVERDRASAYFAQMEEGAQVLISSSIGSEGRNFQFASNLVLFNLPDNPDLLEQSIGRLDRIGQKNDIQIHVPCFENSMQMVLATWYHQGLNAFEETCPMGAALFREFGEELEGFLKNPQAVGFDEFLVRTFKRQQQLKAELEQGRDRLLELNSNGGEVAQALAEAIAKEDNNPHLVNFALSLFDVIGLEQEDLGEQSIVISPTGHMLVPDFPGIAEDSTTVTFDRQLALMREDVEFLTWDHPMIRNGIDLITSGDIGKSAISLLINKHLPAGTLLLEAIYMVETQAPKGLNLTRFLPPTPVRILLGNKGNDMAAQVSFTGLEKQLKPVNKQMANKIAKMAQADIKKLIDISEQKIAAKLPELIEKASQDADSTLSAELYRLTSLQAVNKNIRADEIEALEQQRIESLKQIALANWRLDSLRVIVSNKE.

Residues 162-339 (EVGQRVAPRV…FARLALLDAD (178 aa)) form the Helicase ATP-binding domain. Position 175 to 182 (175 to 182 (DEVGLGKT)) interacts with ATP. Positions 285-288 (DEAH) match the DEAH box motif. In terms of domain architecture, Helicase C-terminal spans 492 to 663 (RIEWLITFLK…GFLKNPQAVG (172 aa)).

It belongs to the SNF2/RAD54 helicase family. RapA subfamily. In terms of assembly, interacts with the RNAP. Has a higher affinity for the core RNAP than for the holoenzyme. Its ATPase activity is stimulated by binding to RNAP.

Its function is as follows. Transcription regulator that activates transcription by stimulating RNA polymerase (RNAP) recycling in case of stress conditions such as supercoiled DNA or high salt concentrations. Probably acts by releasing the RNAP, when it is trapped or immobilized on tightly supercoiled DNA. Does not activate transcription on linear DNA. Probably not involved in DNA repair. The polypeptide is RNA polymerase-associated protein RapA (Actinobacillus pleuropneumoniae serotype 5b (strain L20)).